Here is a 115-residue protein sequence, read N- to C-terminus: Regulator of ribonuclease activity B (115 aa).

The protein belongs to the RraB family. In terms of assembly, interacts with the C-terminal region of Rne.

It is found in the cytoplasm. Its function is as follows. Globally modulates RNA abundance by binding to RNase E (Rne) and regulating its endonucleolytic activity. Can modulate Rne action in a substrate-dependent manner by altering the composition of the degradosome. The chain is Regulator of ribonuclease activity B from Aeromonas hydrophila subsp. hydrophila (strain ATCC 7966 / DSM 30187 / BCRC 13018 / CCUG 14551 / JCM 1027 / KCTC 2358 / NCIMB 9240 / NCTC 8049).